Reading from the N-terminus, the 34-residue chain is Photosystem II reaction center protein M (34 aa).

The chain crosses the membrane as a helical span at residues 5 to 25 (ILAFIATALFILVPTAFLLII).

Belongs to the PsbM family. In terms of assembly, PSII is composed of 1 copy each of membrane proteins PsbA, PsbB, PsbC, PsbD, PsbE, PsbF, PsbH, PsbI, PsbJ, PsbK, PsbL, PsbM, PsbT, PsbX, PsbY, PsbZ, Psb30/Ycf12, at least 3 peripheral proteins of the oxygen-evolving complex and a large number of cofactors. It forms dimeric complexes.

The protein resides in the plastid. It is found in the chloroplast thylakoid membrane. Functionally, one of the components of the core complex of photosystem II (PSII). PSII is a light-driven water:plastoquinone oxidoreductase that uses light energy to abstract electrons from H(2)O, generating O(2) and a proton gradient subsequently used for ATP formation. It consists of a core antenna complex that captures photons, and an electron transfer chain that converts photonic excitation into a charge separation. This subunit is found at the monomer-monomer interface. The polypeptide is Photosystem II reaction center protein M (Cenchrus americanus (Pearl millet)).